Consider the following 28-residue polypeptide: Phospholipase A2 3 (28 aa).

Belongs to the phospholipase A2 family. Group I subfamily. Ca(2+) serves as cofactor. In terms of tissue distribution, expressed by the venom gland.

The protein resides in the secreted. It carries out the reaction a 1,2-diacyl-sn-glycero-3-phosphocholine + H2O = a 1-acyl-sn-glycero-3-phosphocholine + a fatty acid + H(+). In terms of biological role, snake venom phospholipase A2 (PLA2) that inhibits neuromuscular transmission by blocking acetylcholine release from the nerve termini. PLA2 catalyzes the calcium-dependent hydrolysis of the 2-acyl groups in 3-sn-phosphoglycerides. The chain is Phospholipase A2 3 from Micrurus nigrocinctus (Central American coral snake).